Here is an 83-residue protein sequence, read N- to C-terminus: U15-theraphotoxin-Cg1a (83 aa).

Positions 1–21 (MKAAILLAFAGLALLSVICHA) are cleaved as a signal peptide. The propeptide occupies 22–49 (SENVEQDSFEEVFSAIFAMEDDLKPKER). Disulfide bonds link Cys-51/Cys-66, Cys-58/Cys-71, and Cys-65/Cys-77. Ala-81 is modified (alanine amide).

Belongs to the neurotoxin 10 (Hwtx-1) family. 66 (Jztx-24) subfamily. Expressed by the venom gland.

The protein resides in the secreted. Probable ion channel inhibitor. The sequence is that of U15-theraphotoxin-Cg1a from Chilobrachys guangxiensis (Chinese earth tiger tarantula).